Consider the following 912-residue polypeptide: Bifunctional uridylyltransferase/uridylyl-removing enzyme (912 aa).

A uridylyltransferase region spans residues 1–369 (MLPRIANQRA…FFASLRSRRK (369 aa)). The uridylyl-removing stretch occupies residues 370–722 (KVGPFFIEGG…AHWYPARGAT (353 aa)). One can recognise an HD domain in the interval 486–608 (VDEHTIRAIG…VQSQERLRLL (123 aa)). ACT domains follow at residues 723–802 (LVTV…LVPQ) and 834–912 (VIEV…KDAA).

The protein belongs to the GlnD family. Mg(2+) serves as cofactor.

The enzyme catalyses [protein-PII]-L-tyrosine + UTP = [protein-PII]-uridylyl-L-tyrosine + diphosphate. It carries out the reaction [protein-PII]-uridylyl-L-tyrosine + H2O = [protein-PII]-L-tyrosine + UMP + H(+). Its activity is regulated as follows. Uridylyltransferase (UTase) activity is inhibited by glutamine, while glutamine activates uridylyl-removing (UR) activity. Its function is as follows. Modifies, by uridylylation and deuridylylation, the PII regulatory proteins (GlnB and homologs), in response to the nitrogen status of the cell that GlnD senses through the glutamine level. Under low glutamine levels, catalyzes the conversion of the PII proteins and UTP to PII-UMP and PPi, while under higher glutamine levels, GlnD hydrolyzes PII-UMP to PII and UMP (deuridylylation). Thus, controls uridylylation state and activity of the PII proteins, and plays an important role in the regulation of nitrogen assimilation and metabolism. In Novosphingobium aromaticivorans (strain ATCC 700278 / DSM 12444 / CCUG 56034 / CIP 105152 / NBRC 16084 / F199), this protein is Bifunctional uridylyltransferase/uridylyl-removing enzyme.